Here is a 450-residue protein sequence, read N- to C-terminus: Chromosomal replication initiator protein DnaA (450 aa).

The segment at 1-69 (MHDVWRQATE…VGALSVTAGK (69 aa)) is domain I, interacts with DnaA modulators. The segment at 69–113 (KKYFIELVVQEEDQNAEVPQAEDLIIKGHQEIEQPVTSQPETSSS) is domain II. Residues 114 to 330 (SLNPKYTFEL…GMLIRLGAYS (217 aa)) form a domain III, AAA+ region region. The ATP site is built by glycine 158, glycine 160, lysine 161, and serine 162. The interval 331–450 (SLQGIPITLD…IEDIKLILLK (120 aa)) is domain IV, binds dsDNA.

Belongs to the DnaA family. Oligomerizes as a right-handed, spiral filament on DNA at oriC.

It is found in the cytoplasm. Its function is as follows. Plays an essential role in the initiation and regulation of chromosomal replication. ATP-DnaA binds to the origin of replication (oriC) to initiate formation of the DNA replication initiation complex once per cell cycle. Binds the DnaA box (a 9 base pair repeat at the origin) and separates the double-stranded (ds)DNA. Forms a right-handed helical filament on oriC DNA; dsDNA binds to the exterior of the filament while single-stranded (ss)DNA is stabiized in the filament's interior. The ATP-DnaA-oriC complex binds and stabilizes one strand of the AT-rich DNA unwinding element (DUE), permitting loading of DNA polymerase. After initiation quickly degrades to an ADP-DnaA complex that is not apt for DNA replication. Binds acidic phospholipids. This Pelobacter propionicus (strain DSM 2379 / NBRC 103807 / OttBd1) protein is Chromosomal replication initiator protein DnaA.